We begin with the raw amino-acid sequence, 398 residues long: Rhizopuspepsin-4 (398 aa).

An N-terminal signal peptide occupies residues 1-21; that stretch reads MKFTLISSCVALACMALAVEA. The propeptide at 22–74 is activation peptide; that stretch reads APSGKKINVPLSKNANYKPNAKRAIEKANAKYARFRSSSSSSSSSSCGSAGTE. The segment covering 58 to 78 has biased composition (low complexity); it reads SSSSSSSSSSCGSAGTESSGS. Residues 58 to 83 are disordered; that stretch reads SSSSSSSSSSCGSAGTESSGSVPVTD. The Peptidase A1 domain occupies 90–394; it reads YYGEVTVGTP…NPQVPQVQIA (305 aa). Asp108 is an active-site residue. The cysteines at positions 121 and 124 are disulfide-linked. Asp291 is a catalytic residue. Cysteines 325 and 358 form a disulfide.

It belongs to the peptidase A1 family.

It carries out the reaction Hydrolysis of proteins with broad specificity similar to that of pepsin A, preferring hydrophobic residues at P1 and P1'. Clots milk and activates trypsinogen. Does not cleave 4-Gln-|-His-5, but does cleave 10-His-|-Leu-11 and 12-Val-|-Glu-13 in B chain of insulin.. The protein is Rhizopuspepsin-4 of Rhizopus niveus.